A 448-amino-acid polypeptide reads, in one-letter code: Protein chibby homolog 2 (448 aa).

Phosphoserine occurs at positions 41, 86, 89, 97, 124, 144, 148, and 150. Positions 164–198 form a coiled coil; it reads KECMLQEENKSLREENKALREENRMLSKENKILQV. Phosphoserine is present on residues Ser-212 and Ser-225. Residues 242 to 267 are a coiled coil; sequence KEDSTLQLLREENRALQQLLEQKQAY. The interval 270 to 323 is disordered; the sequence is QAEDTAAPAEESKPAPSPHEEPCSPGLLQDQGSGLSSRFEEPKGPPARQEDSKE. Basic and acidic residues-rich tracts occupy residues 279 to 291 and 307 to 323; these read EESKPAPSPHEEP and RFEEPKGPPARQEDSKE. 2 positions are modified to phosphoserine: Ser-335 and Ser-338. The stretch at 356–414 forms a coiled coil; sequence LQLLREMRQALQALLKENRLLQEENRTLQVLRAEHRGFQEENKALWENNKLKLQQKLVI.

The protein belongs to the chibby family. SPERT subfamily. Homodimer. Binds to NEK1. Testis-specific.

The chain is Protein chibby homolog 2 from Homo sapiens (Human).